Here is a 220-residue protein sequence, read N- to C-terminus: MKRHTEELDALYELCSREKMELTESQYELLAAYALLLEQWNKKINLISRKEDAPVVIKHVFHSLLMGLFHPFSAGEKVLDLGTGGGLPGIPLAIAWPETRFLLVDSTGKKIAACQAMIKELGISNAVALHSRVEELKGLTFDTVLSRQVAQLEQLCAYTYRFLKPEGCLICLKGGNLEEEIRTALDARHAHHGFPSTIEHFAISGFSPFFAEKEIVIAQR.

Residues G82, L87, 105-107 (DST), 133-134 (VE), and R147 each bind S-adenosyl-L-methionine.

This sequence belongs to the methyltransferase superfamily. RNA methyltransferase RsmG family.

It localises to the cytoplasm. Functionally, specifically methylates the N7 position of a guanine in 16S rRNA. The chain is Ribosomal RNA small subunit methyltransferase G from Chlorobium limicola (strain DSM 245 / NBRC 103803 / 6330).